The primary structure comprises 552 residues: MPVAATNSESAMQQVLDNLGSLPNATGAAELDLIFLRGIMESPIVRSLAKAHERLEETKLEAVRDNNLELVQEILRDLAELAEQSSTAAELARILQEPHFQSLLETHDSVASKTYETPPPSPGLDPTFSNQPVPPDAVRMVGIRKTAGEHLGVTFRVEGGELVIARILHGGMVAQQGLLHVGDIIKEVNGQPVGSDPRALQELLRSASGSVILKILPSYQEPHLPRQVFVKCHFDYDPARDSLIPCKEAGLRFNAGDLLQIVNQDDANWWQACHVEGGSAGLIPSQLLEEKRKAFVKRDLELTPTSGTLCGSLSGKKKKRMMYLTTKNAEFDRHELLIYEEVARMPPFRRKTLVLIGAQGVGRRSLKNKLILWDPDRYGTTVPYTSRRPKDSEREGQGYSFVSRGEMEADIRAGRYLEHGEYEGNLYGTRIDSIRGVVASGKVCVLDVNPQAVKVLRTAEFVPYVVFIEAPDFETLRAMNRAALESGVSTKQLTEADLRRTVEESSRIQRGYGHYFDLSLVNSNLERTFRELQTAMEKLRTEPQWVPVSWVY.

2 consecutive L27 domains span residues 8 to 59 (SESA…EETK) and 60 to 118 (LEAV…YETP). Ser42 carries the phosphoserine modification. A Phosphothreonine modification is found at Thr117. The residue at position 121 (Ser121) is a Phosphoserine. The PDZ domain occupies 140–219 (MVGIRKTAGE…SVILKILPSY (80 aa)). The region spanning 225-293 (PRQVFVKCHF…PSQLLEEKRK (69 aa)) is the SH3 domain. Positions 350–537 (RKTLVLIGAQ…TFRELQTAME (188 aa)) constitute a Guanylate kinase-like domain.

It belongs to the MAGUK family. Can homomultimerise. Interacts with CACNG2. Interacts (via the SH3-Guanylate kinase-like sub-module) with DLG4/PSD95 and DLGAP1/GKAP. Interacts (via the PDZ domain) with CADM1 (via C-terminus). Interacts with KCNN2/SK2 (via N-terminal domain). Interacts with SRC. Phosphorylated by SRC. In terms of tissue distribution, expressed in hippocampal neurons.

It localises to the cell projection. The protein localises to the dendrite. The protein resides in the postsynaptic density. Its subcellular location is the cytoplasm. It is found in the cytoskeleton. It localises to the membrane. Functionally, postsynaptic MAGUK scaffold protein that links CADM1 cell adhesion molecules to core components of the postsynaptic density. In CA1 pyramidal neurons, required for synaptic KCNN2-containing channel function and long-term potentiation expression. Seems to negatively regulate SRC function in epithelial cells. The sequence is that of MAGUK p55 subfamily member 2 from Rattus norvegicus (Rat).